The following is a 126-amino-acid chain: MIVGLGTDIAEIERVEKALARSGENFARRILTDSELEQFHASKQQGRFLAKRFAAKEAASKALGTGIAQGVTFHDFTISHDKLGKPLLTLSGQAAELASQLQIENIHLSISDERHYAMATVILERR.

Residues D8 and E57 each contribute to the Mg(2+) site.

It belongs to the P-Pant transferase superfamily. AcpS family. It depends on Mg(2+) as a cofactor.

Its subcellular location is the cytoplasm. The enzyme catalyses apo-[ACP] + CoA = holo-[ACP] + adenosine 3',5'-bisphosphate + H(+). Its function is as follows. Transfers the 4'-phosphopantetheine moiety from coenzyme A to a Ser of acyl-carrier-protein. In Vibrio cholerae serotype O1 (strain ATCC 39541 / Classical Ogawa 395 / O395), this protein is Holo-[acyl-carrier-protein] synthase.